A 104-amino-acid polypeptide reads, in one-letter code: UPF0213 protein PA3854 (104 aa).

Residues 13-88 (KCWSVYLVRA…KALSKRAKER (76 aa)) form the GIY-YIG domain.

Belongs to the UPF0213 family.

This chain is UPF0213 protein PA3854, found in Pseudomonas aeruginosa (strain ATCC 15692 / DSM 22644 / CIP 104116 / JCM 14847 / LMG 12228 / 1C / PRS 101 / PAO1).